Consider the following 520-residue polypeptide: Legumin A2 (520 aa).

An N-terminal signal peptide occupies residues 1 to 22; that stretch reads MATKLLALSLSFCFLLLGGCFA. Intrachain disulfides connect Cys32/Cys65 and Cys108/Cys342. The region spanning 37–233 is the Cupin type-1 1 domain; sequence LNALEPDNRI…AFNVNRHIVD (197 aa). The tract at residues 250 to 339 is disordered; the sequence is VKGGLSIISP…RRQGDNGLEE (90 aa). The Cupin type-1 2 domain occupies 348-497; it reads LNIGPSSSPD…TFNLQRNEAR (150 aa).

Belongs to the 11S seed storage protein (globulins) family. In terms of assembly, hexamer; each subunit is composed of an acidic and a basic chain derived from a single precursor and linked by a disulfide bond.

Functionally, this protein found in the seeds of many leguminous and non-leguminous plants is the source of sulfur-containing amino acids in seed meals. The sequence is that of Legumin A2 (LEGA2) from Pisum sativum (Garden pea).